The sequence spans 477 residues: Cysteine--tRNA ligase (477 aa).

Cysteine 34 contributes to the Zn(2+) binding site. The 'HIGH' region signature appears at 36-46 (PTVYDFAHIGN). Cysteine 235, histidine 260, and glutamate 264 together coordinate Zn(2+). Residues 293-297 (KMSKS) carry the 'KMSKS' region motif. Lysine 296 serves as a coordination point for ATP.

It belongs to the class-I aminoacyl-tRNA synthetase family. As to quaternary structure, monomer. The cofactor is Zn(2+).

Its subcellular location is the cytoplasm. The enzyme catalyses tRNA(Cys) + L-cysteine + ATP = L-cysteinyl-tRNA(Cys) + AMP + diphosphate. This is Cysteine--tRNA ligase from Mesorhizobium japonicum (strain LMG 29417 / CECT 9101 / MAFF 303099) (Mesorhizobium loti (strain MAFF 303099)).